A 290-amino-acid chain; its full sequence is Pyridoxal kinase PdxY (290 aa).

Substrate-binding positions include S12 and 47-48; that span reads TQ. ATP-binding positions include D114, E151, K184, and 211 to 214; that span reads RPLL. D225 contributes to the substrate binding site.

Belongs to the pyridoxine kinase family. PdxY subfamily. Homodimer. The cofactor is Mg(2+).

It catalyses the reaction pyridoxal + ATP = pyridoxal 5'-phosphate + ADP + H(+). The protein operates within cofactor metabolism; pyridoxal 5'-phosphate salvage; pyridoxal 5'-phosphate from pyridoxal: step 1/1. Pyridoxal kinase involved in the salvage pathway of pyridoxal 5'-phosphate (PLP). Catalyzes the phosphorylation of pyridoxal to PLP. This is Pyridoxal kinase PdxY from Pseudomonas putida (strain ATCC 47054 / DSM 6125 / CFBP 8728 / NCIMB 11950 / KT2440).